A 37-amino-acid chain; its full sequence is Cytochrome b6-f complex subunit 5 (37 aa).

Residues 5–25 traverse the membrane as a helical segment; it reads FLFGIVLGLIPITLAGLFVTA.

The protein belongs to the PetG family. As to quaternary structure, the 4 large subunits of the cytochrome b6-f complex are cytochrome b6, subunit IV (17 kDa polypeptide, PetD), cytochrome f and the Rieske protein, while the 4 small subunits are PetG, PetL, PetM and PetN. The complex functions as a dimer.

It localises to the plastid. The protein localises to the chloroplast thylakoid membrane. In terms of biological role, component of the cytochrome b6-f complex, which mediates electron transfer between photosystem II (PSII) and photosystem I (PSI), cyclic electron flow around PSI, and state transitions. PetG is required for either the stability or assembly of the cytochrome b6-f complex. This chain is Cytochrome b6-f complex subunit 5, found in Capsella bursa-pastoris (Shepherd's purse).